The primary structure comprises 62 residues: Large ribosomal subunit protein bL33 (62 aa).

It belongs to the bacterial ribosomal protein bL33 family.

The polypeptide is Large ribosomal subunit protein bL33 (Cyanothece sp. (strain PCC 7425 / ATCC 29141)).